Consider the following 335-residue polypeptide: Holliday junction branch migration complex subunit RuvB (335 aa).

The interval 4–183 (ADNLNVTSII…FGIVQRLEFY (180 aa)) is large ATPase domain (RuvB-L). Residues Arg-23, Gly-64, Lys-67, Thr-68, Thr-69, 130–132 (EDY), Arg-173, Tyr-183, and Arg-220 each bind ATP. Position 68 (Thr-68) interacts with Mg(2+). Residues 184–254 (PTKDLQNIIS…VAMNALNMLN (71 aa)) form a small ATPAse domain (RuvB-S) region. Positions 257–335 (TAGFNFMDRQ…HFSLKQSRDI (79 aa)) are head domain (RuvB-H). DNA contacts are provided by Arg-293, Arg-312, and Arg-317.

The protein belongs to the RuvB family. As to quaternary structure, homohexamer. Forms an RuvA(8)-RuvB(12)-Holliday junction (HJ) complex. HJ DNA is sandwiched between 2 RuvA tetramers; dsDNA enters through RuvA and exits via RuvB. An RuvB hexamer assembles on each DNA strand where it exits the tetramer. Each RuvB hexamer is contacted by two RuvA subunits (via domain III) on 2 adjacent RuvB subunits; this complex drives branch migration. In the full resolvosome a probable DNA-RuvA(4)-RuvB(12)-RuvC(2) complex forms which resolves the HJ.

It is found in the cytoplasm. It carries out the reaction ATP + H2O = ADP + phosphate + H(+). Functionally, the RuvA-RuvB-RuvC complex processes Holliday junction (HJ) DNA during genetic recombination and DNA repair, while the RuvA-RuvB complex plays an important role in the rescue of blocked DNA replication forks via replication fork reversal (RFR). RuvA specifically binds to HJ cruciform DNA, conferring on it an open structure. The RuvB hexamer acts as an ATP-dependent pump, pulling dsDNA into and through the RuvAB complex. RuvB forms 2 homohexamers on either side of HJ DNA bound by 1 or 2 RuvA tetramers; 4 subunits per hexamer contact DNA at a time. Coordinated motions by a converter formed by DNA-disengaged RuvB subunits stimulates ATP hydrolysis and nucleotide exchange. Immobilization of the converter enables RuvB to convert the ATP-contained energy into a lever motion, pulling 2 nucleotides of DNA out of the RuvA tetramer per ATP hydrolyzed, thus driving DNA branch migration. The RuvB motors rotate together with the DNA substrate, which together with the progressing nucleotide cycle form the mechanistic basis for DNA recombination by continuous HJ branch migration. Branch migration allows RuvC to scan DNA until it finds its consensus sequence, where it cleaves and resolves cruciform DNA. The polypeptide is Holliday junction branch migration complex subunit RuvB (Baumannia cicadellinicola subsp. Homalodisca coagulata).